A 64-amino-acid polypeptide reads, in one-letter code: Large ribosomal subunit protein bL35 (64 aa).

Belongs to the bacterial ribosomal protein bL35 family.

This Vibrio campbellii (strain ATCC BAA-1116) protein is Large ribosomal subunit protein bL35.